The primary structure comprises 452 residues: Plasminogen-binding protein PgbA (452 aa).

Residues Q265 to K452 form a disordered region. Basic and acidic residues-rich tracts occupy residues L284–K310 and K317–S373. A compositionally biased stretch (polar residues) spans D374–N391. Over residues N392–K452 the composition is skewed to basic and acidic residues.

Its subcellular location is the cell surface. In terms of biological role, binds plasminogen, specifically, and in a concentration and lysine-dependent manner. Plasminogen is the precursor of plasmin, a serine protease that cleaves fibrin, fibronectin, laminin and vitronectin. Acquisition of plasminogen/plasmin could enable H.pylori to degrade host components. This Helicobacter pylori (strain ATCC 700392 / 26695) (Campylobacter pylori) protein is Plasminogen-binding protein PgbA (pgbA).